The sequence spans 151 residues: UPF0178 protein PST_0536 (151 aa).

Belongs to the UPF0178 family.

This is UPF0178 protein PST_0536 from Stutzerimonas stutzeri (strain A1501) (Pseudomonas stutzeri).